Reading from the N-terminus, the 340-residue chain is Phenylalanine--tRNA ligase alpha subunit (340 aa).

Glutamate 254 contacts Mg(2+).

This sequence belongs to the class-II aminoacyl-tRNA synthetase family. Phe-tRNA synthetase alpha subunit type 1 subfamily. As to quaternary structure, tetramer of two alpha and two beta subunits. Requires Mg(2+) as cofactor.

Its subcellular location is the cytoplasm. The enzyme catalyses tRNA(Phe) + L-phenylalanine + ATP = L-phenylalanyl-tRNA(Phe) + AMP + diphosphate + H(+). The protein is Phenylalanine--tRNA ligase alpha subunit of Caldicellulosiruptor saccharolyticus (strain ATCC 43494 / DSM 8903 / Tp8T 6331).